We begin with the raw amino-acid sequence, 507 residues long: MFS-type transporter acdC (507 aa).

Residues 1 to 50 form a disordered region; the sequence is MSPNAPAVDIGAAPSLDTPEGDTKQPAEDHVEKDSNLVDWDGPDDPEHPQ. Residues 21–36 are compositionally biased toward basic and acidic residues; it reads GDTKQPAEDHVEKDSN. Asn51 carries an N-linked (GlcNAc...) asparagine glycan. A helical membrane pass occupies residues 58–78; that stretch reads WGITFSLASMTMWITFSSSVL. An N-linked (GlcNAc...) asparagine glycan is attached at Asn90. The next 5 membrane-spanning stretches (helical) occupy residues 95–115, 125–145, 155–175, 186–206, and 215–235; these read VMPLATTLVIFGFALGPLCWA, LPTFLGYGVFAIFQVPVAVAP, FFVGVFGSSALSVGPGVMADI, PFFFAANLLGPILGPIIGGFI, and WTAWLTLITSIFFGVLALLIV. Residue Asn257 is glycosylated (N-linked (GlcNAc...) asparagine). Helical transmembrane passes span 290-310, 328-348, 371-391, 395-415, 442-462, and 466-486; these read PILICFTVYLSLIYGILYLFL, IAGLPFLGILVGMVLGIGIII, LVEMMLTSITMPIGLFWFGWA, HWMVQTIAGVPLGIGLFVLFM, FLGGSFPLFATAMYHNLGVDW, and ILGFISVAMVPIPFAFYIFGA.

This sequence belongs to the major facilitator superfamily. CAR1 family.

It localises to the membrane. Functionally, MFS-type transporter; part of the gene cluster that mediates the biosynthesis of aspcandine, a pyrrolobenzazepine alkaloid. The chain is MFS-type transporter acdC from Aspergillus candidus.